The chain runs to 422 residues: Putative serpin-Z8 (422 aa).

Residues 369 to 393 are RCL; it reads GTVAAAATMTRMLPSGVPPPPVDFV.

This sequence belongs to the serpin family.

Probable serine protease inhibitor. This Oryza sativa subsp. japonica (Rice) protein is Putative serpin-Z8.